A 505-amino-acid polypeptide reads, in one-letter code: Maturase K (505 aa).

This sequence belongs to the intron maturase 2 family. MatK subfamily.

Its subcellular location is the plastid. The protein resides in the chloroplast. Its function is as follows. Usually encoded in the trnK tRNA gene intron. Probably assists in splicing its own and other chloroplast group II introns. This Elaeagnus umbellata (Autumn olive) protein is Maturase K.